Reading from the N-terminus, the 374-residue chain is DNA replication and repair protein RecF (374 aa).

ATP is bound at residue 30 to 37 (GENAQGKT).

The protein belongs to the RecF family.

The protein localises to the cytoplasm. Its function is as follows. The RecF protein is involved in DNA metabolism; it is required for DNA replication and normal SOS inducibility. RecF binds preferentially to single-stranded, linear DNA. It also seems to bind ATP. In Geobacillus sp. (strain WCH70), this protein is DNA replication and repair protein RecF.